The following is a 1024-amino-acid chain: Zn(2)-C6 fungal-type transcription factor FTF1a (1024 aa).

The zn(2)-C6 fungal-type DNA-binding region spans 137-164; sequence CIACRRKKVRCSGEKPACKHCLHSHIPC.

The protein resides in the nucleus. In terms of biological role, zn(2)-C6 fungal-type transcription factor that has a role in the establishment of the fungus within the plant and/or the progress of the disease. Regulates the expression of virulence factors such as SIX1 and SIX6. In Fusarium oxysporum f. sp. lycopersici (strain 4287 / CBS 123668 / FGSC 9935 / NRRL 34936) (Fusarium vascular wilt of tomato), this protein is Zn(2)-C6 fungal-type transcription factor FTF1a.